Reading from the N-terminus, the 222-residue chain is 23kDa protein (222 aa).

Positions 1–12 are enriched in polar residues; that stretch reads MEPHDQSGSTTR. The segment at 1 to 21 is disordered; that stretch reads MEPHDQSGSTTRQLDEIRDRR.

In terms of biological role, may act as a regulatory factor during viral transcription. The protein is 23kDa protein of Indian citrus ringspot virus (isolate Kinnow mandarin/India/K1/1996) (ICRSV).